The sequence spans 139 residues: Small ribosomal subunit protein uS12 (139 aa).

Aspartate 102 bears the 3-methylthioaspartic acid mark.

This sequence belongs to the universal ribosomal protein uS12 family. In terms of assembly, part of the 30S ribosomal subunit. Contacts proteins S8 and S17. May interact with IF1 in the 30S initiation complex.

With S4 and S5 plays an important role in translational accuracy. Its function is as follows. Interacts with and stabilizes bases of the 16S rRNA that are involved in tRNA selection in the A site and with the mRNA backbone. Located at the interface of the 30S and 50S subunits, it traverses the body of the 30S subunit contacting proteins on the other side and probably holding the rRNA structure together. The combined cluster of proteins S8, S12 and S17 appears to hold together the shoulder and platform of the 30S subunit. This Mycoplasma capricolum subsp. capricolum (strain California kid / ATCC 27343 / NCTC 10154) protein is Small ribosomal subunit protein uS12.